Consider the following 138-residue polypeptide: Small ribosomal subunit protein uS11c (138 aa).

The disordered stretch occupies residues 1–23 (MAKPIPRIGSRRNGRISSRKSTR). Positions 9 to 23 (GSRRNGRISSRKSTR) are enriched in basic residues.

This sequence belongs to the universal ribosomal protein uS11 family. Part of the 30S ribosomal subunit.

The protein resides in the plastid. It localises to the chloroplast. This is Small ribosomal subunit protein uS11c from Cucumis sativus (Cucumber).